The following is a 245-amino-acid chain: Demethylmenaquinone methyltransferase (245 aa).

Residues Thr69, Asp90, and 118-119 (DC) each bind S-adenosyl-L-methionine.

Belongs to the class I-like SAM-binding methyltransferase superfamily. MenG/UbiE family.

It carries out the reaction a 2-demethylmenaquinol + S-adenosyl-L-methionine = a menaquinol + S-adenosyl-L-homocysteine + H(+). The protein operates within quinol/quinone metabolism; menaquinone biosynthesis; menaquinol from 1,4-dihydroxy-2-naphthoate: step 2/2. Functionally, methyltransferase required for the conversion of demethylmenaquinol (DMKH2) to menaquinol (MKH2). This is Demethylmenaquinone methyltransferase from Porphyromonas gingivalis (strain ATCC 33277 / DSM 20709 / CIP 103683 / JCM 12257 / NCTC 11834 / 2561).